Here is a 124-residue protein sequence, read N- to C-terminus: Large ribosomal subunit protein uL22 (124 aa).

The protein belongs to the universal ribosomal protein uL22 family. In terms of assembly, part of the 50S ribosomal subunit.

Functionally, this protein binds specifically to 23S rRNA; its binding is stimulated by other ribosomal proteins, e.g. L4, L17, and L20. It is important during the early stages of 50S assembly. It makes multiple contacts with different domains of the 23S rRNA in the assembled 50S subunit and ribosome. The globular domain of the protein is located near the polypeptide exit tunnel on the outside of the subunit, while an extended beta-hairpin is found that lines the wall of the exit tunnel in the center of the 70S ribosome. This Treponema pallidum (strain Nichols) protein is Large ribosomal subunit protein uL22.